The chain runs to 222 residues: N-(5'-phosphoribosyl)anthranilate isomerase (222 aa).

The protein belongs to the TrpF family.

The enzyme catalyses N-(5-phospho-beta-D-ribosyl)anthranilate = 1-(2-carboxyphenylamino)-1-deoxy-D-ribulose 5-phosphate. Its pathway is amino-acid biosynthesis; L-tryptophan biosynthesis; L-tryptophan from chorismate: step 3/5. This chain is N-(5'-phosphoribosyl)anthranilate isomerase, found in Symbiobacterium thermophilum (strain DSM 24528 / JCM 14929 / IAM 14863 / T).